Consider the following 427-residue polypeptide: Trigger factor (427 aa).

Residues 163 to 248 (GDVVNLDFDG…INEVKSKEVP (86 aa)) enclose the PPIase FKBP-type domain.

Belongs to the FKBP-type PPIase family. Tig subfamily.

It is found in the cytoplasm. The catalysed reaction is [protein]-peptidylproline (omega=180) = [protein]-peptidylproline (omega=0). In terms of biological role, involved in protein export. Acts as a chaperone by maintaining the newly synthesized protein in an open conformation. Functions as a peptidyl-prolyl cis-trans isomerase. This is Trigger factor from Macrococcus caseolyticus (strain JCSC5402) (Macrococcoides caseolyticum).